The primary structure comprises 651 residues: Macrolide export ATP-binding/permease protein MacB (651 aa).

One can recognise an ABC transporter domain in the interval 2-239 (IEIVNVTKTY…PQMPQGGMEA (238 aa)). ATP is bound at residue 38 to 45 (GASGSGKS). 4 consecutive transmembrane segments (helical) span residues 269–289 (FLSVLGILVGVASVIAMMALG), 532–552 (IAAISLVVGGIGIMNIMLVSV), 589–609 (IIGIVVGVGVSVMLSAFAGWA), and 614–634 (MFSVVLATGFSVLIGLFFGLW).

The protein belongs to the ABC transporter superfamily. Macrolide exporter (TC 3.A.1.122) family. As to quaternary structure, homodimer.

It is found in the cell inner membrane. Its function is as follows. Non-canonical ABC transporter that contains transmembrane domains (TMD), which form a pore in the inner membrane, and an ATP-binding domain (NBD), which is responsible for energy generation. Confers resistance against macrolides. The sequence is that of Macrolide export ATP-binding/permease protein MacB from Chlorobaculum tepidum (strain ATCC 49652 / DSM 12025 / NBRC 103806 / TLS) (Chlorobium tepidum).